Consider the following 365-residue polypeptide: UPF0718 protein MJ0584 (365 aa).

11 helical membrane-spanning segments follow: residues 6–26 (MSFI…YLNV), 32–52 (LLMA…NFII), 67–87 (VAAV…PLFA), 108–128 (AINV…IGFL), 130–150 (AVFA…IFKS), 174–194 (ITFF…PKLF), 201–221 (LYDG…ILAV), 245–265 (IVFP…AIIP), 282–302 (FIAS…VPII), 308–328 (LGMG…LSIP), and 344–364 (TYLG…GIIL).

This sequence belongs to the UPF0718 family.

It is found in the cell membrane. This chain is UPF0718 protein MJ0584, found in Methanocaldococcus jannaschii (strain ATCC 43067 / DSM 2661 / JAL-1 / JCM 10045 / NBRC 100440) (Methanococcus jannaschii).